The following is a 229-amino-acid chain: Potassium/proton antiporter CemA (229 aa).

3 consecutive transmembrane segments (helical) span residues 6–26, 114–134, and 189–209; these read AFIPFLYLASIVFLPWWISLS, ILCFVILSGYSILGNEELLII, and IISGLVSTFPVILDTIFKYWI.

This sequence belongs to the CemA family.

It is found in the plastid. Its subcellular location is the chloroplast inner membrane. The enzyme catalyses K(+)(in) + H(+)(out) = K(+)(out) + H(+)(in). Its function is as follows. Contributes to K(+)/H(+) antiport activity by supporting proton efflux to control proton extrusion and homeostasis in chloroplasts in a light-dependent manner to modulate photosynthesis. Prevents excessive induction of non-photochemical quenching (NPQ) under continuous-light conditions. Indirectly promotes efficient inorganic carbon uptake into chloroplasts. This is Potassium/proton antiporter CemA from Carica papaya (Papaya).